We begin with the raw amino-acid sequence, 186 residues long: Lipid A palmitoyltransferase PagP (186 aa).

The first 25 residues, 1–25 (MNVSKYVAIFSFVFIQLISVGKVFA), serve as a signal peptide directing secretion. Active-site residues include histidine 58, aspartate 101, and serine 102.

The protein belongs to the lipid A palmitoyltransferase family. Homodimer.

The protein localises to the cell outer membrane. The catalysed reaction is lipid A (E. coli) + a 1-hexadecanoyl-2-acyl-sn-glycero-3-phosphocholine = hepta-acyl lipid A (E. coli) + a 2-acyl-sn-glycero-3-phosphocholine. It carries out the reaction lipid IIA + a 1-hexadecanoyl-2-acyl-sn-glycero-3-phosphocholine = lipid IIB + a 2-acyl-sn-glycero-3-phosphocholine. It catalyses the reaction lipid IVA (E. coli) + a 1-hexadecanoyl-2-acyl-sn-glycero-3-phosphocholine = lipid IVB (E. coli) + a 2-acyl-sn-glycero-3-phosphocholine. In terms of biological role, transfers a palmitate residue from the sn-1 position of a phospholipid to the N-linked hydroxymyristate on the proximal unit of lipid A or its precursors. The protein is Lipid A palmitoyltransferase PagP of Escherichia coli (strain ATCC 55124 / KO11FL).